The chain runs to 358 residues: ATP-dependent (S)-NAD(P)H-hydrate dehydratase (358 aa).

The YjeF C-terminal domain occupies 63–354 (LLQSAKNVIP…QQIHQAFEEL (292 aa)). (6S)-NADPHX contacts are provided by residues Gly-163 and 220–226 (NVVEFDR). ATP-binding positions include 261–265 (KGQHD) and 280–289 (GSNRRCGGQG). Residue Asp-290 participates in (6S)-NADPHX binding.

This sequence belongs to the NnrD/CARKD family. Mg(2+) is required as a cofactor.

The catalysed reaction is (6S)-NADHX + ATP = ADP + phosphate + NADH + H(+). It carries out the reaction (6S)-NADPHX + ATP = ADP + phosphate + NADPH + H(+). Its function is as follows. Catalyzes the dehydration of the S-form of NAD(P)HX at the expense of ATP, which is converted to ADP. Together with NAD(P)HX epimerase, which catalyzes the epimerization of the S- and R-forms, the enzyme allows the repair of both epimers of NAD(P)HX, a damaged form of NAD(P)H that is a result of enzymatic or heat-dependent hydration. The sequence is that of ATP-dependent (S)-NAD(P)H-hydrate dehydratase from Nematostella vectensis (Starlet sea anemone).